Consider the following 38-residue polypeptide: Large ribosomal subunit protein bL36 (38 aa).

The protein belongs to the bacterial ribosomal protein bL36 family.

In Paraburkholderia phymatum (strain DSM 17167 / CIP 108236 / LMG 21445 / STM815) (Burkholderia phymatum), this protein is Large ribosomal subunit protein bL36.